We begin with the raw amino-acid sequence, 442 residues long: Mitochondrial distribution and morphology protein 12 (442 aa).

The SMP-LTD domain maps to 1-442 (MSIDINWEAA…VYPSFWTFLV (442 aa)). Disordered regions lie at residues 67–125 (NDFY…RVGY), 202–277 (LSLA…RRMR), and 364–387 (EGYH…RRSN). A compositionally biased stretch (acidic residues) spans 69–80 (FYEEDEDGEDLS). Residues 90-100 (PSSQGLSQSTP) show a composition bias toward polar residues. Positions 101 to 112 (NGDAGSSNSSSN) are enriched in low complexity. A compositionally biased stretch (basic and acidic residues) spans 213–222 (RQRERARSSD). Over residues 227-245 (SPQSRSRPSTSSTRQRTST) the composition is skewed to low complexity.

This sequence belongs to the MDM12 family. In terms of assembly, component of the ER-mitochondria encounter structure (ERMES) or MDM complex, composed of MMM1, MDM10, MDM12 and MDM34. An MMM1 homodimer associates with one molecule of MDM12 on each side in a pairwise head-to-tail manner, and the SMP-LTD domains of MMM1 and MDM12 generate a continuous hydrophobic tunnel for phospholipid trafficking.

It is found in the mitochondrion outer membrane. The protein resides in the endoplasmic reticulum membrane. Functionally, component of the ERMES/MDM complex, which serves as a molecular tether to connect the endoplasmic reticulum (ER) and mitochondria. Components of this complex are involved in the control of mitochondrial shape and protein biogenesis, and function in nonvesicular lipid trafficking between the ER and mitochondria. MDM12 is required for the interaction of the ER-resident membrane protein MMM1 and the outer mitochondrial membrane-resident beta-barrel protein MDM10. The MDM12-MMM1 subcomplex functions in the major beta-barrel assembly pathway that is responsible for biogenesis of all mitochondrial outer membrane beta-barrel proteins, and acts in a late step after the SAM complex. The MDM10-MDM12-MMM1 subcomplex further acts in the TOM40-specific pathway after the action of the MDM12-MMM1 complex. Essential for establishing and maintaining the structure of mitochondria and maintenance of mtDNA nucleoids. The sequence is that of Mitochondrial distribution and morphology protein 12 from Arthroderma otae (strain ATCC MYA-4605 / CBS 113480) (Microsporum canis).